Reading from the N-terminus, the 106-residue chain is Ig kappa chain C region, B allele (106 aa).

In terms of domain architecture, Ig-like spans 5-102 (PTVSIFPPST…SSSPVVKSFN (98 aa)). Cys26 and Cys86 are oxidised to a cystine.

This Rattus norvegicus (Rat) protein is Ig kappa chain C region, B allele.